Consider the following 476-residue polypeptide: Ribulose bisphosphate carboxylase large chain (476 aa).

Positions 1 to 2 are excised as a propeptide; that stretch reads MS. Pro-3 carries the post-translational modification N-acetylproline. N6,N6,N6-trimethyllysine is present on Lys-14. Substrate is bound by residues Asn-123 and Thr-173. The Proton acceptor role is filled by Lys-175. Lys-177 lines the substrate pocket. The Mg(2+) site is built by Lys-201, Asp-203, and Glu-204. Lys-201 is modified (N6-carboxylysine). His-294 serves as the catalytic Proton acceptor. 3 residues coordinate substrate: Arg-295, His-327, and Ser-379.

This sequence belongs to the RuBisCO large chain family. Type I subfamily. Heterohexadecamer of 8 large chains and 8 small chains; disulfide-linked. The disulfide link is formed within the large subunit homodimers. It depends on Mg(2+) as a cofactor. The disulfide bond which can form in the large chain dimeric partners within the hexadecamer appears to be associated with oxidative stress and protein turnover.

It is found in the plastid. It localises to the chloroplast. The catalysed reaction is 2 (2R)-3-phosphoglycerate + 2 H(+) = D-ribulose 1,5-bisphosphate + CO2 + H2O. It catalyses the reaction D-ribulose 1,5-bisphosphate + O2 = 2-phosphoglycolate + (2R)-3-phosphoglycerate + 2 H(+). RuBisCO catalyzes two reactions: the carboxylation of D-ribulose 1,5-bisphosphate, the primary event in carbon dioxide fixation, as well as the oxidative fragmentation of the pentose substrate in the photorespiration process. Both reactions occur simultaneously and in competition at the same active site. The protein is Ribulose bisphosphate carboxylase large chain of Zea mays (Maize).